Reading from the N-terminus, the 35-residue chain is Photosystem II reaction center protein T (35 aa).

Residues 3–23 (ALVYTFLLVSTLGIIFFAIFF) form a helical membrane-spanning segment.

This sequence belongs to the PsbT family. As to quaternary structure, PSII is composed of 1 copy each of membrane proteins PsbA, PsbB, PsbC, PsbD, PsbE, PsbF, PsbH, PsbI, PsbJ, PsbK, PsbL, PsbM, PsbT, PsbY, PsbZ, Psb30/Ycf12, at least 3 peripheral proteins of the oxygen-evolving complex and a large number of cofactors. It forms dimeric complexes.

Its subcellular location is the plastid. The protein resides in the chloroplast thylakoid membrane. In terms of biological role, found at the monomer-monomer interface of the photosystem II (PS II) dimer, plays a role in assembly and dimerization of PSII. PSII is a light-driven water plastoquinone oxidoreductase, using light energy to abstract electrons from H(2)O, generating a proton gradient subsequently used for ATP formation. In Amborella trichopoda, this protein is Photosystem II reaction center protein T.